A 239-amino-acid chain; its full sequence is tRNA (guanine-N(7)-)-methyltransferase (239 aa).

E68, E93, D120, and D143 together coordinate S-adenosyl-L-methionine. D143 is an active-site residue. Substrate contacts are provided by residues K147, D180, and 217–220; that span reads TKFE.

It belongs to the class I-like SAM-binding methyltransferase superfamily. TrmB family.

The catalysed reaction is guanosine(46) in tRNA + S-adenosyl-L-methionine = N(7)-methylguanosine(46) in tRNA + S-adenosyl-L-homocysteine. The protein operates within tRNA modification; N(7)-methylguanine-tRNA biosynthesis. Functionally, catalyzes the formation of N(7)-methylguanine at position 46 (m7G46) in tRNA. In Vibrio vulnificus (strain CMCP6), this protein is tRNA (guanine-N(7)-)-methyltransferase.